Consider the following 431-residue polypeptide: MTWLSGLYFISIASLVFCVIGLILSGVILISRKLLVKIHPCKLKINNDDSLTKTVDSGHSLLSSLLDSGIPIPSPCGGKATCKQCKVKIVKGADQPLETDRATFSKRQLEQGWRLSCQTKVQHDMNLEIEERYLNASSWEGTVVSNDNVATFIKELVVSVSPEHPIPFKPGGYLQISVPAYKTNTSDWKQTMAPEYHSDWERFNLFNQIIDNSLLESGSANKAYSLASYPAELPVIKFNIRIATPPFINNAPSPNIPWGVCSSYIFSLKPGDKITVSGPYGESFMKENNRPLIFLIGGAGSSFGRSHILDLLLDKHSTRDITLWYGARSLKENIYQEEYEKLEKDFPNFHYHLVLSEPLAEDIASGWDKNDPEKTNFLFRAFELGQLSKLSNPEDYLYYVCGPPLHNSSILKLLDNYGVERSSIILDDFGN.

Residues 10 to 30 traverse the membrane as a helical segment; it reads ISIASLVFCVIGLILSGVILI. Residues 41–133 form the 2Fe-2S ferredoxin-type domain; it reads CKLKINNDDS…DMNLEIEERY (93 aa). [2Fe-2S] cluster is bound by residues Cys-76, Cys-82, Cys-85, and Cys-117. In terms of domain architecture, FAD-binding FR-type spans 136-286; it reads ASSWEGTVVS…SGPYGESFMK (151 aa).

This sequence belongs to the NqrF family. Composed of six subunits; NqrA, NqrB, NqrC, NqrD, NqrE and NqrF. It depends on [2Fe-2S] cluster as a cofactor. Requires FAD as cofactor.

The protein resides in the cell inner membrane. It carries out the reaction a ubiquinone + n Na(+)(in) + NADH + H(+) = a ubiquinol + n Na(+)(out) + NAD(+). Its function is as follows. NQR complex catalyzes the reduction of ubiquinone-1 to ubiquinol by two successive reactions, coupled with the transport of Na(+) ions from the cytoplasm to the periplasm. The first step is catalyzed by NqrF, which accepts electrons from NADH and reduces ubiquinone-1 to ubisemiquinone by a one-electron transfer pathway. The polypeptide is Na(+)-translocating NADH-quinone reductase subunit F (Chlamydia felis (strain Fe/C-56) (Chlamydophila felis)).